Here is a 336-residue protein sequence, read N- to C-terminus: HTH-type transcriptional repressor PurR (336 aa).

An HTH lacI-type domain is found at 2–56 (ATIKDVAKMAGVSTTTVSHVINKTRFVAKDTEEAVLSAIKQLNYSPSAVARSLKV). The H-T-H motif DNA-binding region spans 4-23 (IKDVAKMAGVSTTTVSHVIN). The DNA-binding element occupies 48–56 (SAVARSLKV). Positions 73, 188, 190, 219, and 273 each coordinate hypoxanthine.

Homodimer.

Its pathway is purine metabolism; purine nucleotide biosynthesis [regulation]. Functionally, is the main repressor of the genes involved in the de novo synthesis of purine nucleotides, regulating purB, purC, purEK, purF, purHD, purL, purMN and guaBA expression. PurR is allosterically activated to bind its cognate DNA by binding the purine corepressors, hypoxanthine or guanine, thereby effecting transcription repression. This Haemophilus influenzae (strain PittGG) protein is HTH-type transcriptional repressor PurR.